Here is a 42-residue protein sequence, read N- to C-terminus: Cytochrome b6-f complex subunit 7 (42 aa).

A helical transmembrane segment spans residues 19-37; it reads AVVCFSMTLFGLSLGFGLL.

This sequence belongs to the PetM family. As to quaternary structure, the 4 large subunits of the cytochrome b6-f complex are cytochrome b6, subunit IV (17 kDa polypeptide, PetD), cytochrome f and the Rieske protein, while the 4 small subunits are PetG, PetL, PetM and PetN. The complex functions as a dimer.

It is found in the plastid. Its subcellular location is the chloroplast thylakoid membrane. In terms of biological role, component of the cytochrome b6-f complex, which mediates electron transfer between photosystem II (PSII) and photosystem I (PSI), cyclic electron flow around PSI, and state transitions. This Phaeodactylum tricornutum (strain CCAP 1055/1) protein is Cytochrome b6-f complex subunit 7.